The chain runs to 421 residues: Alpha-tubulin N-acetyltransferase 1 (421 aa).

One can recognise an N-acetyltransferase domain in the interval 1 to 190 (MEFPFDVDAL…NNFVIFEGFF (190 aa)). Lys-56 carries the post-translational modification N6-acetyllysine; by autocatalysis. 124–137 (FYIHESVQRHGHGR) is a binding site for acetyl-CoA. Lys-146 bears the N6-acetyllysine; by autocatalysis mark. Acetyl-CoA is bound at residue 160-169 (SPKLLKFLNK). A disordered region spans residues 214–235 (PIPAAPARKLPPKRAEGDIKPY). Over residues 226-235 (KRAEGDIKPY) the composition is skewed to basic and acidic residues. N6-acetyllysine; by autocatalysis occurs at positions 233 and 244. A disordered region spans residues 252–284 (PLNRAPRRATPPAHPPPRSSSLGNSPDRGPLRP). 2 positions are modified to phosphoserine: Ser-272 and Ser-276. Residue Arg-305 is modified to Asymmetric dimethylarginine. Position 315 is a phosphoserine (Ser-315). Omega-N-methylarginine is present on Arg-323. Positions 342-351 (FNTSFLGTGN) are enriched in polar residues. The disordered stretch occupies residues 342 to 398 (FNTSFLGTGNQERKQGEQEAEDRSASEDQVLLQDGSGEEPTHTVAPRAQAPPAQSWM). Residues 352–367 (QERKQGEQEAEDRSAS) show a composition bias toward basic and acidic residues.

The protein belongs to the acetyltransferase ATAT1 family. As to quaternary structure, component of the BBSome complex. Interacts with AP2 alpha-adaptins, including AP2A2, but not with AP1 gamma-adaptin (AP1G1/AP1G2); this interaction is required for efficient alpha-tubulin acetylation, hence clathrin-coated pits are sites of microtubule acetylation. Post-translationally, autoacetylation strongly increases tubulin acetylation.

The protein localises to the cytoplasm. Its subcellular location is the membrane. It is found in the clathrin-coated pit. The protein resides in the cell junction. It localises to the focal adhesion. The protein localises to the cell projection. Its subcellular location is the axon. It is found in the cytoskeleton. The protein resides in the spindle. It catalyses the reaction L-lysyl-[alpha-tubulin] + acetyl-CoA = N(6)-acetyl-L-lysyl-[alpha-tubulin] + CoA + H(+). Specifically acetylates 'Lys-40' in alpha-tubulin on the lumenal side of microtubules. Promotes microtubule destabilization and accelerates microtubule dynamics; this activity may be independent of acetylation activity. Acetylates alpha-tubulin with a slow enzymatic rate, due to a catalytic site that is not optimized for acetyl transfer. Enters the microtubule through each end and diffuses quickly throughout the lumen of microtubules. Acetylates only long/old microtubules because of its slow acetylation rate since it does not have time to act on dynamically unstable microtubules before the enzyme is released. Required for normal sperm flagellar function. Promotes directional cell locomotion and chemotaxis, through AP2A2-dependent acetylation of alpha-tubulin at clathrin-coated pits that are concentrated at the leading edge of migrating cells. May facilitate primary cilium assembly. In Rattus norvegicus (Rat), this protein is Alpha-tubulin N-acetyltransferase 1.